Reading from the N-terminus, the 169-residue chain is Small ribosomal subunit protein uS5 (169 aa).

An S5 DRBM domain is found at 15-79; it reads LKDQVVAINR…ESAKKNLVKV (65 aa).

Belongs to the universal ribosomal protein uS5 family. As to quaternary structure, part of the 30S ribosomal subunit. Contacts proteins S4 and S8.

With S4 and S12 plays an important role in translational accuracy. Functionally, located at the back of the 30S subunit body where it stabilizes the conformation of the head with respect to the body. The sequence is that of Small ribosomal subunit protein uS5 from Koribacter versatilis (strain Ellin345).